Here is a 160-residue protein sequence, read N- to C-terminus: UPF0262 protein BSUIS_A0274 (160 aa).

The protein belongs to the UPF0262 family.

The protein is UPF0262 protein BSUIS_A0274 of Brucella suis (strain ATCC 23445 / NCTC 10510).